The primary structure comprises 414 residues: Transforming growth factor beta-2 proprotein (414 aa).

An N-terminal signal peptide occupies residues 1-20; sequence MHYCVLSAFLLLHLVTAALS. 3 N-linked (GlcNAc...) asparagine glycosylation sites follow: Asn72, Asn140, and Asn241. Disulfide bonds link Cys309–Cys318, Cys317–Cys380, Cys346–Cys411, and Cys350–Cys413.

This sequence belongs to the TGF-beta family. As to quaternary structure, interacts with the serine proteases, HTRA1 and HTRA3. Interacts with ASPN. Interacts with MFAP5. In terms of assembly, interacts with Transforming growth factor beta-2 (TGF-beta-2) chain; interaction is non-covalent and maintains (TGF-beta-2) in a latent state. Interacts with LRRC32/GARP; leading to regulate activation of TGF-beta-2. Interacts with NREP; the interaction results in a decrease in TGFB2 autoinduction. Transforming growth factor beta-2: Homodimer; disulfide-linked. Transforming growth factor beta-2: Interacts with TGF-beta receptors (TGFBR1 and TGFBR2), leading to signal transduction. Post-translationally, the precursor proprotein is cleaved in the Golgi apparatus to form Transforming growth factor beta-2 (TGF-beta-2) and Latency-associated peptide (LAP) chains, which remain non-covalently linked, rendering TGF-beta-2 inactive.

Its subcellular location is the secreted. It is found in the extracellular space. It localises to the extracellular matrix. Its function is as follows. Precursor of the Latency-associated peptide (LAP) and Transforming growth factor beta-2 (TGF-beta-2) chains, which constitute the regulatory and active subunit of TGF-beta-2, respectively. Required to maintain the Transforming growth factor beta-2 (TGF-beta-2) chain in a latent state during storage in extracellular matrix. Associates non-covalently with TGF-beta-2 and regulates its activation via interaction with 'milieu molecules', such as LTBP1 and LRRC32/GARP, that control activation of TGF-beta-2. In terms of biological role, multifunctional protein that regulates various processes such as angiogenesis and heart development. Activation into mature form follows different steps: following cleavage of the proprotein in the Golgi apparatus, Latency-associated peptide (LAP) and Transforming growth factor beta-2 (TGF-beta-2) chains remain non-covalently linked rendering TGF-beta-2 inactive during storage in extracellular matrix. At the same time, LAP chain interacts with 'milieu molecules', such as LTBP1 and LRRC32/GARP, that control activation of TGF-beta-2 and maintain it in a latent state during storage in extracellular milieus. Once activated following release of LAP, TGF-beta-2 acts by binding to TGF-beta receptors (TGFBR1 and TGFBR2), which transduce signal. The polypeptide is Transforming growth factor beta-2 proprotein (TGFB2) (Mustela putorius furo (European domestic ferret)).